The following is a 346-amino-acid chain: Holliday junction branch migration complex subunit RuvB (346 aa).

Positions 1–11 are enriched in polar residues; it reads MTEQRTIASSA. The interval 1-20 is disordered; that stretch reads MTEQRTIASSATREDEAADA. A large ATPase domain (RuvB-L) region spans residues 1 to 183; that stretch reads MTEQRTIASS…FGIVQRLEFY (183 aa). Residues Ile-22, Arg-23, Gly-64, Lys-67, Thr-68, Thr-69, 130 to 132, Arg-173, Tyr-183, and Arg-220 each bind ATP; that span reads EDF. Thr-68 is a Mg(2+) binding site. The small ATPAse domain (RuvB-S) stretch occupies residues 184–254; sequence SPQELTRIVI…VAQAAMQMLK (71 aa). Residues 257 to 346 are head domain (RuvB-H); the sequence is PEGFDELDRR…PAIGEPGDLF (90 aa). DNA contacts are provided by Arg-293, Arg-312, and Arg-317.

This sequence belongs to the RuvB family. Homohexamer. Forms an RuvA(8)-RuvB(12)-Holliday junction (HJ) complex. HJ DNA is sandwiched between 2 RuvA tetramers; dsDNA enters through RuvA and exits via RuvB. An RuvB hexamer assembles on each DNA strand where it exits the tetramer. Each RuvB hexamer is contacted by two RuvA subunits (via domain III) on 2 adjacent RuvB subunits; this complex drives branch migration. In the full resolvosome a probable DNA-RuvA(4)-RuvB(12)-RuvC(2) complex forms which resolves the HJ.

The protein localises to the cytoplasm. It catalyses the reaction ATP + H2O = ADP + phosphate + H(+). In terms of biological role, the RuvA-RuvB-RuvC complex processes Holliday junction (HJ) DNA during genetic recombination and DNA repair, while the RuvA-RuvB complex plays an important role in the rescue of blocked DNA replication forks via replication fork reversal (RFR). RuvA specifically binds to HJ cruciform DNA, conferring on it an open structure. The RuvB hexamer acts as an ATP-dependent pump, pulling dsDNA into and through the RuvAB complex. RuvB forms 2 homohexamers on either side of HJ DNA bound by 1 or 2 RuvA tetramers; 4 subunits per hexamer contact DNA at a time. Coordinated motions by a converter formed by DNA-disengaged RuvB subunits stimulates ATP hydrolysis and nucleotide exchange. Immobilization of the converter enables RuvB to convert the ATP-contained energy into a lever motion, pulling 2 nucleotides of DNA out of the RuvA tetramer per ATP hydrolyzed, thus driving DNA branch migration. The RuvB motors rotate together with the DNA substrate, which together with the progressing nucleotide cycle form the mechanistic basis for DNA recombination by continuous HJ branch migration. Branch migration allows RuvC to scan DNA until it finds its consensus sequence, where it cleaves and resolves cruciform DNA. This chain is Holliday junction branch migration complex subunit RuvB, found in Xanthomonas campestris pv. campestris (strain B100).